The chain runs to 565 residues: Nephrocystin-1 (565 aa).

The segment covering 1 to 32 (GEEEDEEEEEEEESEEGGGEEEESEEEEEEKQ) has biased composition (acidic residues). Disordered regions lie at residues 1–46 (GEEE…KEYI) and 95–132 (VEPY…KQRT). A coiled-coil region spans residues 2–48 (EEEDEEEEEEEESEEGGGEEEESEEEEEEKQENESHHQATSKEYIAV). Position 14 is a phosphoserine (Ser14). Residues 40 to 100 (ATSKEYIAVG…PRTYVEPYNK (61 aa)) enclose the SH3 domain. Over residues 104-118 (QDTSEEEDSEEDVEV) the composition is skewed to acidic residues. Tyr182 carries the phosphotyrosine; by FAK2 modification. Tyr554 is subject to Phosphotyrosine; by SRC.

This sequence belongs to the nephrocystin-1 family. Interacts with Crk-associated substrate BCAR1, NPHP4, PTK2B/PYK2 and tensin. Interacts with INVS and NPHP3. Interacts with AHI1 and TNK2. Interacts with NPHP4 in a complex containing NPHP1, NPHP4 and RPGRIP1L/NPHP8. Interacts with IQCB1; the interaction likely requires additional interactors. Interacts with KIF7. Interacts with ANKS3. Interacts with SPATA7. Interacts with FLNA. In terms of tissue distribution, expressed in renal cells (at protein level).

It localises to the cell junction. Its subcellular location is the adherens junction. The protein resides in the cell projection. The protein localises to the cilium. It is found in the cytoplasm. It localises to the cytoskeleton. Its subcellular location is the cilium axoneme. The protein resides in the tight junction. Functionally, together with BCAR1 it may play a role in the control of epithelial cell polarity. Involved in the organization of apical junctions in kidney cells together with NPHP4 and RPGRIP1L/NPHP8. Does not seem to be strictly required for ciliogenesis. Seems to help to recruit PTK2B/PYK2 to cell matrix adhesions, thereby initiating phosphorylation of PTK2B/PYK2 and PTK2B/PYK2-dependent signaling. May play a role in the regulation of intraflagellar transport (IFT) during cilia assembly. Required for normal retina development. In connecting photoreceptor cilia influences the movement of some IFT proteins such as IFT88 and WDR19. Involved in spermatogenesis. The protein is Nephrocystin-1 (NPHP1) of Canis lupus familiaris (Dog).